The chain runs to 285 residues: SLAM family member 8 (285 aa).

A signal peptide spans 1-22 (MVMRPLWSLLLWEALLPITVTG). Topologically, residues 23-233 (AQVLSKVGGS…AAPGKASYKD (211 aa)) are extracellular. N85 carries an N-linked (GlcNAc...) asparagine glycan. The 88-residue stretch at 128–215 (PVVQVFIAVE…PVSWDLATVT (88 aa)) folds into the Ig-like C2-type domain. A disulfide bridge connects residues C152 and C201. The helical transmembrane segment at 234–254 (VLLVVVPVSLLLMLVTLFSAW) threads the bilayer. The Cytoplasmic segment spans residues 255–285 (HWCPCSGKKKKDVHADRVGPETENPLVQDLP). The disordered stretch occupies residues 262–285 (KKKKDVHADRVGPETENPLVQDLP).

Expressed in lymph node, spleen, thymus and bone marrow.

The protein resides in the membrane. Functionally, may play a role in B-lineage commitment and/or modulation of signaling through the B-cell receptor. The polypeptide is SLAM family member 8 (SLAMF8) (Homo sapiens (Human)).